The primary structure comprises 494 residues: Nuclear distribution protein PAC1 (494 aa).

The region spanning 14 to 46 is the LisH domain; that stretch reads QKNELDKSVLRYLNWNYKQTVRHEHAQDYESVR. Residues 90-123 adopt a coiled-coil conformation; the sequence is NSIVRLQKKIIELEQNTETLVSQIKDLNTQVSEL. WD repeat units lie at residues 153–192, 196–244, 251–292, 295–334, 347–395, 415–454, and 457–492; these read NVES…IPLA, SHTK…CKFQ, GHEH…SLKT, PHSQ…SVGT, HFIE…LMAH, GHLS…HVWE, and HTGF…SNVF.

This sequence belongs to the WD repeat LIS1/nudF family. In terms of assembly, self-associates. Interacts with NDL1 and dynein.

The protein localises to the cytoplasm. It is found in the cytoskeleton. It localises to the spindle pole. In terms of biological role, positively regulates the activity of the minus-end directed microtubule motor protein dynein. Plays a central role in positioning the mitotic spindle at the bud neck during cell division. Targets cytoplasmic dynein to microtubule plus ends, thereby promoting dynein-mediated microtubule sliding along the bud cortex and consequently the movement of the mitotic spindle to the bud neck. This is Nuclear distribution protein PAC1 from Saccharomyces cerevisiae (strain RM11-1a) (Baker's yeast).